Here is a 505-residue protein sequence, read N- to C-terminus: Megakaryocyte-associated tyrosine-protein kinase (505 aa).

The 63-residue stretch at 46–108 folds into the SH3 domain; that stretch reads APGTQCMTKC…AAAALRHGEA (63 aa). Residues 120–209 enclose the SH2 domain; the sequence is WFHGKISGQE…AICTKLVKPR (90 aa). A Protein kinase domain is found at 233–481; sequence LTLGAQIGEG…IVEKLGRELR (249 aa). ATP contacts are provided by residues 239–247 and Lys260; that span reads IGEGEFGAV. The active-site Proton acceptor is Asp350. The interval 483–505 is disordered; the sequence is VGVSAPAGGQEAEGSAPTRSQDP.

It belongs to the protein kinase superfamily. Tyr protein kinase family. CSK subfamily. Interacts with KIT. As to expression, most abundant in brain, and to a lesser extent in the spleen, the thymus and the liver. Also found in the T-cell lineage.

The protein localises to the cytoplasm. The protein resides in the membrane. It catalyses the reaction L-tyrosyl-[protein] + ATP = O-phospho-L-tyrosyl-[protein] + ADP + H(+). Its function is as follows. Could play a significant role in the signal transduction of hematopoietic cells. May regulate tyrosine kinase activity of SRC-family members in brain by specifically phosphorylating their C-terminal regulatory tyrosine residue which acts as a negative regulatory site. It may play an inhibitory role in the control of T-cell proliferation. This chain is Megakaryocyte-associated tyrosine-protein kinase (Matk), found in Mus musculus (Mouse).